Here is a 1008-residue protein sequence, read N- to C-terminus: Ubiquitin carboxyl-terminal hydrolase 16 (1008 aa).

Residues 7–27 traverse the membrane as a helical segment; it reads LGISSLVLVVSLVLPLIGLFV. Residues Cys-74, Cys-77, Cys-85, Cys-88, Cys-94, Cys-98, His-107, and Cys-111 each coordinate Zn(2+). The MYND-type zinc-finger motif lies at 74–111; that stretch reads CPVCYCLATTRCSRCKAVRYCSGKCQIIHWRQGHKDEC. Disordered regions lie at residues 122 to 149, 159 to 178, 187 to 233, 275 to 309, and 326 to 379; these read DESDSDLRLGEENGQNTPEETLLVGPEP, LSNRARSPEDGNGDIADNKD, VSVA…LDAH, SVHKPEDDAGQNQSQSRSLHSLVTDRHPVSADPSL, and SDSC…YISD. Residues 193–203 are compositionally biased toward low complexity; the sequence is SGSSFSGFSSS. Positions 222–233 are enriched in basic and acidic residues; the sequence is ESERSESLLDAH. A compositionally biased stretch (polar residues) spans 284–295; that stretch reads GQNQSQSRSLHS. The segment covering 340–351 has biased composition (low complexity); that stretch reads SSLHFSFGSGSS. In terms of domain architecture, USP spans 542–847; sequence CGLINVGNSC…GAYMLFYARC (306 aa). Residue Cys-551 is the Nucleophile of the active site. His-807 (proton acceptor) is an active-site residue. 2 disordered regions span residues 859–905 and 952–1008; these read KTEA…GNIQ and FIFG…GGER. 2 stretches are compositionally biased toward low complexity: residues 878-888 and 965-992; these read STISRSVSTSS and SETPSPTSSSSSSSPPFTRRSPLSRSSP.

This sequence belongs to the peptidase C19 family. In terms of assembly, interacts with SHM1 and SHM4. Interacts with HIPP27. In terms of tissue distribution, expressed in flowers, siliques, rosette leaves, cauline leaves, stems and at a lower level in roots. In roots, expressed in the sieve elements.

The protein localises to the membrane. It carries out the reaction Thiol-dependent hydrolysis of ester, thioester, amide, peptide and isopeptide bonds formed by the C-terminal Gly of ubiquitin (a 76-residue protein attached to proteins as an intracellular targeting signal).. Recognizes and hydrolyzes the peptide bond at the C-terminal Gly of ubiquitin. Involved in the processing of poly-ubiquitin precursors as well as that of ubiquitinated proteins. Involved in salt tolerance by modulating sodium transport activity and repressing cell death at least partially through modulating SHM1 stability and activity. Involved in cadmium tolerance by interacting with HIPP27 and probably modulating its stability. This is Ubiquitin carboxyl-terminal hydrolase 16 (UBP16) from Arabidopsis thaliana (Mouse-ear cress).